A 446-amino-acid chain; its full sequence is Phosphoglucosamine mutase (446 aa).

Serine 103 acts as the Phosphoserine intermediate in catalysis. Serine 103, aspartate 242, aspartate 244, and aspartate 246 together coordinate Mg(2+). Serine 103 is subject to Phosphoserine.

The protein belongs to the phosphohexose mutase family. Requires Mg(2+) as cofactor. In terms of processing, activated by phosphorylation.

It catalyses the reaction alpha-D-glucosamine 1-phosphate = D-glucosamine 6-phosphate. Functionally, catalyzes the conversion of glucosamine-6-phosphate to glucosamine-1-phosphate. This chain is Phosphoglucosamine mutase, found in Vibrio atlanticus (strain LGP32) (Vibrio splendidus (strain Mel32)).